The primary structure comprises 371 residues: Glutamate 5-kinase (371 aa).

Lysine 10 serves as a coordination point for ATP. Positions 50, 137, and 149 each coordinate substrate. Residues 169–170 (SD) and 208–214 (TGGMYTK) each bind ATP. The PUA domain occupies 274–352 (QGKVYIDDGA…EEIKNILGED (79 aa)).

It belongs to the glutamate 5-kinase family.

It localises to the cytoplasm. The catalysed reaction is L-glutamate + ATP = L-glutamyl 5-phosphate + ADP. It participates in amino-acid biosynthesis; L-proline biosynthesis; L-glutamate 5-semialdehyde from L-glutamate: step 1/2. Functionally, catalyzes the transfer of a phosphate group to glutamate to form L-glutamate 5-phosphate. The polypeptide is Glutamate 5-kinase (Dictyoglomus thermophilum (strain ATCC 35947 / DSM 3960 / H-6-12)).